A 446-amino-acid polypeptide reads, in one-letter code: Thymidine phosphorylase (446 aa).

It belongs to the thymidine/pyrimidine-nucleoside phosphorylase family. As to quaternary structure, homodimer.

The enzyme catalyses thymidine + phosphate = 2-deoxy-alpha-D-ribose 1-phosphate + thymine. It participates in pyrimidine metabolism; dTMP biosynthesis via salvage pathway; dTMP from thymine: step 1/2. Its function is as follows. The enzymes which catalyze the reversible phosphorolysis of pyrimidine nucleosides are involved in the degradation of these compounds and in their utilization as carbon and energy sources, or in the rescue of pyrimidine bases for nucleotide synthesis. The protein is Thymidine phosphorylase of Idiomarina loihiensis (strain ATCC BAA-735 / DSM 15497 / L2-TR).